Reading from the N-terminus, the 266-residue chain is uncharacterized protein (266 aa).

The next 4 membrane-spanning stretches (helical) occupy residues 9–29, 79–99, 122–142, and 193–213; these read IFII…IELP, GIMT…INPF, LSVM…MLSG, and GWYL…MVFI.

The protein localises to the membrane. This is an uncharacterized protein from Dictyostelium discoideum (Social amoeba).